Reading from the N-terminus, the 254-residue chain is Ditrans,polycis-undecaprenyl-diphosphate synthase ((2E,6E)-farnesyl-diphosphate specific) (254 aa).

The active site involves Asp-25. Asp-25 contributes to the Mg(2+) binding site. Substrate-binding positions include 26 to 29, Trp-30, Arg-38, His-42, and 70 to 72; these read GNGR and SSE. Asn-73 functions as the Proton acceptor in the catalytic mechanism. Substrate-binding residues include Trp-74, Arg-76, and Arg-193. His-198 lines the Mg(2+) pocket. 199 to 201 is a binding site for substrate; it reads RIS. Glu-212 serves as a coordination point for Mg(2+).

The protein belongs to the UPP synthase family. As to quaternary structure, homodimer. Mg(2+) serves as cofactor.

The catalysed reaction is 8 isopentenyl diphosphate + (2E,6E)-farnesyl diphosphate = di-trans,octa-cis-undecaprenyl diphosphate + 8 diphosphate. Catalyzes the sequential condensation of isopentenyl diphosphate (IPP) with (2E,6E)-farnesyl diphosphate (E,E-FPP) to yield (2Z,6Z,10Z,14Z,18Z,22Z,26Z,30Z,34E,38E)-undecaprenyl diphosphate (di-trans,octa-cis-UPP). UPP is the precursor of glycosyl carrier lipid in the biosynthesis of bacterial cell wall polysaccharide components such as peptidoglycan and lipopolysaccharide. The chain is Ditrans,polycis-undecaprenyl-diphosphate synthase ((2E,6E)-farnesyl-diphosphate specific) from Photorhabdus laumondii subsp. laumondii (strain DSM 15139 / CIP 105565 / TT01) (Photorhabdus luminescens subsp. laumondii).